The chain runs to 96 residues: Uteroglobin (96 aa).

An N-terminal signal peptide occupies residues 1-19 (MKIAITITVLMLSICCSSA).

The protein belongs to the secretoglobin family. Antiparallel homodimer; disulfide-linked. Interaction with LMBR1L is controversial. As to expression, club cells (nonciliated cells of the surface epithelium of the pulmonary airways).

It localises to the secreted. Its function is as follows. Binds phosphatidylcholine, phosphatidylinositol, polychlorinated biphenyls (PCB) and weakly progesterone, potent inhibitor of phospholipase A2. This is Uteroglobin (Scgb1a1) from Rattus norvegicus (Rat).